The primary structure comprises 433 residues: MSFKDLGVSKWLLEALAAMKIRSPTSIQAECIPQILAGRDCIGGAKTGSGKTIAFAAPMMTKWSEDPFGIYGLVLTPTRELALQIAEQFLALGASMNIKVAVVVGGEDMVKQALEIQKSPHFIIATPGRLADHILNSGDDTVGGLKRIKFLVLDEADRLLSNSFGSDLERCFKILPDASKRQTLLFTATVTDAVRALKDKPVPEGKKPVFIHEIVSKDQVAIPATLTISYVFVPSYVKEAYLHNILVSPKYEKASAIVFVNRTYTAEILRRTLRKLDIRVASLHSEMPQSERTNSLHRFRAGAARVLIATDVASRGLDIPNVELVVNQDIPADPDDYIHRVGRTARAGKKGGSVSIVSEKDVERILAIENHINKKMDLLEEVNDDKIIKESLSIVTAAKRESVADMEKEGFGEKRKINKRKREERTRDSKKRK.

Residues 1–29 (MSFKDLGVSKWLLEALAAMKIRSPTSIQA) carry the Q motif motif. The Helicase ATP-binding domain maps to 32-208 (IPQILAGRDC…DKPVPEGKKP (177 aa)). 45–52 (AKTGSGKT) is a binding site for ATP. A DEAD box motif is present at residues 154-157 (DEAD). The Helicase C-terminal domain occupies 247–387 (VSPKYEKASA…LLEEVNDDKI (141 aa)). Residues 401-427 (ESVADMEKEGFGEKRKINKRKREERTR) show a composition bias toward basic and acidic residues. The segment at 401–433 (ESVADMEKEGFGEKRKINKRKREERTRDSKKRK) is disordered.

It belongs to the DEAD box helicase family. DDX49/DBP8 subfamily.

The protein resides in the nucleus. Its subcellular location is the nucleolus. It catalyses the reaction ATP + H2O = ADP + phosphate + H(+). Functionally, ATP-binding RNA helicase involved in 40S ribosomal subunit biogenesis and is required for the normal formation of 18S rRNAs through pre-rRNA processing at A0, A1 and A2 sites. Required for vegetative growth. The protein is ATP-dependent RNA helicase DBP8 (DBP8) of Meyerozyma guilliermondii (strain ATCC 6260 / CBS 566 / DSM 6381 / JCM 1539 / NBRC 10279 / NRRL Y-324) (Yeast).